Here is a 445-residue protein sequence, read N- to C-terminus: Methionine aminopeptidase 2 (445 aa).

The tract at residues 1-89 is disordered; that stretch reads MAAQAPVDEI…DPPRVLISQL (89 aa). Residues 60–74 are compositionally biased toward basic residues; the sequence is AKKKKKRKPKKKKKN. H198 lines the substrate pocket. Residues D218, D229, and H298 each coordinate a divalent metal cation. H306 serves as a coordination point for substrate. The a divalent metal cation site is built by E331 and E426.

It belongs to the peptidase M24A family. Methionine aminopeptidase eukaryotic type 2 subfamily. Co(2+) serves as cofactor. Zn(2+) is required as a cofactor. Requires Mn(2+) as cofactor. It depends on Fe(2+) as a cofactor.

Its subcellular location is the cytoplasm. It carries out the reaction Release of N-terminal amino acids, preferentially methionine, from peptides and arylamides.. Cotranslationally removes the N-terminal methionine from nascent proteins. The N-terminal methionine is often cleaved when the second residue in the primary sequence is small and uncharged (Met-Ala-, Cys, Gly, Pro, Ser, Thr, or Val). The chain is Methionine aminopeptidase 2 from Podospora anserina (strain S / ATCC MYA-4624 / DSM 980 / FGSC 10383) (Pleurage anserina).